We begin with the raw amino-acid sequence, 315 residues long: 4-carboxy-2-hydroxymuconate-6-semialdehyde dehydrogenase (315 aa).

This sequence belongs to the Gfo/Idh/MocA family. In terms of assembly, homodimer.

It carries out the reaction 4-carboxy-2-hydroxymuconate semialdehyde hemiacetal + NADP(+) = 2-oxo-2H-pyran-4,6-dicarboxylate + NADPH + H(+). It participates in secondary metabolite metabolism; lignin degradation. Inhibited by p-chloromercuribenzoate (10 mM), HgCl2 (10 mM), or 5,5-dithiobis(2-nitrobenzoate) (100 mM). In terms of biological role, involved in the degradation of protocatechuate (PCA) via the PCA 4,5-cleavage pathway. Catalyzes the oxidation of the hemiacetal form of 4-carboxy-2-hydroxymuconate-6-semialdehyde (CHMS) to produce 2-pyrone-4,6-dicarboxylate (PDC). LigC has 10-times-higher affinity to NADP than to NAD. This chain is 4-carboxy-2-hydroxymuconate-6-semialdehyde dehydrogenase (ligC), found in Sphingobium sp. (strain NBRC 103272 / SYK-6).